Here is a 191-residue protein sequence, read N- to C-terminus: dTTP/UTP pyrophosphatase (191 aa).

Asp-71 (proton acceptor) is an active-site residue.

The protein belongs to the Maf family. YhdE subfamily. A divalent metal cation is required as a cofactor.

The protein localises to the cytoplasm. It carries out the reaction dTTP + H2O = dTMP + diphosphate + H(+). It catalyses the reaction UTP + H2O = UMP + diphosphate + H(+). Its function is as follows. Nucleoside triphosphate pyrophosphatase that hydrolyzes dTTP and UTP. May have a dual role in cell division arrest and in preventing the incorporation of modified nucleotides into cellular nucleic acids. This Hyphomonas neptunium (strain ATCC 15444) protein is dTTP/UTP pyrophosphatase.